We begin with the raw amino-acid sequence, 376 residues long: Succinyl-diaminopimelate desuccinylase 1 (376 aa).

His67 serves as a coordination point for Zn(2+). Asp69 is an active-site residue. Asp100 is a Zn(2+) binding site. Glu134 functions as the Proton acceptor in the catalytic mechanism. Glu135, Glu163, and His349 together coordinate Zn(2+).

It belongs to the peptidase M20A family. DapE subfamily. In terms of assembly, homodimer. The cofactor is Zn(2+). Co(2+) serves as cofactor.

It carries out the reaction N-succinyl-(2S,6S)-2,6-diaminopimelate + H2O = (2S,6S)-2,6-diaminopimelate + succinate. It functions in the pathway amino-acid biosynthesis; L-lysine biosynthesis via DAP pathway; LL-2,6-diaminopimelate from (S)-tetrahydrodipicolinate (succinylase route): step 3/3. Catalyzes the hydrolysis of N-succinyl-L,L-diaminopimelic acid (SDAP), forming succinate and LL-2,6-diaminopimelate (DAP), an intermediate involved in the bacterial biosynthesis of lysine and meso-diaminopimelic acid, an essential component of bacterial cell walls. The chain is Succinyl-diaminopimelate desuccinylase 1 from Shewanella loihica (strain ATCC BAA-1088 / PV-4).